The chain runs to 537 residues: Intercellular adhesion molecule 1 (537 aa).

An N-terminal signal peptide occupies residues 1-27; it reads MASTRAKPTLPLLLALVTVVIPGPGDA. At 28–485 the chain is on the extracellular side; sequence QVSIHPREAF…LTVLYHSQNN (458 aa). 2 consecutive Ig-like C2-type domains span residues 41–102 and 127–195; these read GGSV…QSSA and GKDL…LDLR. N-linked (GlcNAc...) asparagine glycosylation occurs at asparagine 47. 3 disulfides stabilise this stretch: cysteine 48-cysteine 91, cysteine 52-cysteine 95, and cysteine 134-cysteine 188. Residues 151–153 carry the Cell attachment site; atypical motif; sequence RGE. Positions 179 to 181 match the Cell attachment site motif; the sequence is RGD. 9 N-linked (GlcNAc...) asparagine glycosylation sites follow: asparagine 185, asparagine 204, asparagine 267, asparagine 311, asparagine 362, asparagine 388, asparagine 409, asparagine 456, and asparagine 469. Residues 232–299 enclose the Ig-like C2-type 3 domain; that stretch reads GTQQKLFCSL…LRCVLELADQ (68 aa). Cysteine 239 and cysteine 292 are disulfide-bonded. The 55-residue stretch at 327–381 folds into the Ig-like C2-type 4 domain; the sequence is GSQVTVKCEAHSGSKVVLLSGVEPRPPTPQVQFTLNASSEDHKRSFFCSAALEVA. Cysteine 334 and cysteine 374 are disulfide-bonded. Cystine bridges form between cysteine 406–cysteine 422, cysteine 422–cysteine 461, and cysteine 434–cysteine 461. Residues 415 to 468 enclose the Ig-like C2-type 5 domain; that stretch reads GSQQTLKCQAWGNPSPKMTCRRKADGALLPIGVVKSVKQEMNGTYVCHAFSSHG. The chain crosses the membrane as a helical span at residues 486 to 509; the sequence is WTIIILVPVLLVIVGLVMAASYVY. The Cytoplasmic portion of the chain corresponds to 510 to 537; that stretch reads NRQRKIRIYKLQKAQEEAIKLKGQAPPP.

The protein belongs to the immunoglobulin superfamily. ICAM family. In terms of assembly, homodimer. Interacts with MUC1 and promotes cell aggregation in epithelial cells. Interacts with ARHGEF26/SGEF. Interacts (on T cell side) with CD81, CD247 and CD9 at immunological synapses between antigen-presenting cells and T cells. Post-translationally, monoubiquitinated, which is promoted by MARCH9 and leads to endocytosis. In terms of tissue distribution, expressed at low level on a subpopulation of lymphocytes, macrophages, and endothelial cells, but is strongly induced on these cells, and on fibroblasts and epithelial cells.

The protein localises to the membrane. Functionally, ICAM proteins are ligands for the leukocyte adhesion protein LFA-1 (integrin alpha-L/beta-2). During leukocyte trans-endothelial migration, ICAM1 engagement promotes the assembly of endothelial apical cups through ARHGEF26/SGEF and RHOG activation. In Mus musculus (Mouse), this protein is Intercellular adhesion molecule 1 (Icam1).